A 5538-amino-acid chain; its full sequence is Leashin (5538 aa).

The segment covering 1 to 10 has biased composition (gly residues); the sequence is MFRALMGGGR. 22 disordered regions span residues 1-270, 286-315, 331-365, 510-555, 596-712, 800-901, 913-944, 1027-1145, 1164-1297, 1310-1398, 1432-1993, 2067-2146, 2165-2207, 2233-3065, 3077-3894, 3910-4034, 4072-4128, 4238-4421, 4442-4463, 4509-4698, 4733-4850, and 4910-5052; these read MFRA…SSMG, EVDP…TFGI, LPLP…PHTH, SRDA…KKSS, TESV…DISQ, AATS…FPTG, ALAS…PVPT, NRPH…KDSF, VLSG…GYRD, PTPP…RYVS, EDPT…TSVE, SELL…VNAF, NRLS…SPPA, PEAA…SQPI, MAEE…EIVS, EEKA…DTGL, KFKQ…EEPL, EAAL…SNQA, PRPL…DEND, LRRQ…TSNT, KTDG…VEQA, and ALTV…RHRR. The woronin bodies-binding region stretch occupies residues 1-1100; that stretch reads MFRALMGGGR…RASGVQLIDR (1100 aa). Low complexity predominate over residues 14 to 23; sequence SRSTTSSSKS. Composition is skewed to basic and acidic residues over residues 42-51 and 89-167; these read SRGDDRDRGL and VEHD…ERSR. Over residues 299-313 the composition is skewed to polar residues; that stretch reads AGTTSEPPKPSNTTF. Residues 334 to 352 show a composition bias toward pro residues; it reads PASPTSPPEPVPTTAPYAP. Positions 514-523 are enriched in basic residues; that stretch reads PRKHHYRQRR. Over residues 598–607 the composition is skewed to polar residues; that stretch reads SVSTARRSQT. The span at 639 to 655 shows a compositional bias: basic residues; that stretch reads HRSRSRSHSSSRNRRHS. Over residues 660–674 the composition is skewed to low complexity; that stretch reads AAVGAAVGSGAIALA. The segment covering 682–698 has biased composition (basic residues); it reads SRSRSRSRFPRKSKGRK. Basic and acidic residues predominate over residues 809–825; the sequence is RAGEILVAKETRSRHSD. Composition is skewed to low complexity over residues 842 to 851 and 862 to 880; these read GDQSSSSVSS and GSDE…GWRW. The segment covering 881-891 has biased composition (basic residues); sequence GSKKNKKKKRA. 8 stretches are compositionally biased toward basic and acidic residues: residues 1068–1091, 1098–1145, 1178–1198, 1207–1226, 1356–1365, 1375–1387, 1447–1462, and 1478–1488; these read LTKE…DAER, IDRD…KDSF, SQRR…RGSE, SKSE…RQPE, WGEHKTHEYE, SVDH…REQP, GRVE…ESKS, and EEKAPSSRVIE. A compositionally biased stretch (low complexity) spans 1506–1516; that stretch reads QESSEPQTRTS. Basic and acidic residues-rich tracts occupy residues 1521–1536, 1549–1559, and 1572–1594; these read VIDR…DGSR, GKERDESELRA, and EELR…DRRS. A compositionally biased stretch (basic residues) spans 1639–1648; the sequence is KKKRRKRRSK. Basic and acidic residues-rich tracts occupy residues 1672–1686, 1700–1773, and 1788–1800; these read EKLK…EKKA, EPVD…QRRE, and KSGE…KLSE. 2 stretches are compositionally biased toward low complexity: residues 1867 to 1876 and 1889 to 1898; these read PAPRSRSRPA and SQSSRRSSIL. Residues 1950–1975 show a composition bias toward basic and acidic residues; the sequence is KNSREMRPLWLVERHGPGHGEHKLEE. Polar residues-rich tracts occupy residues 1984–1993 and 2121–2130; these read KTSSANTSVE and TPQNNVTAAS. Composition is skewed to basic and acidic residues over residues 2187 to 2196, 2269 to 2279, and 2307 to 2320; these read DADRTHKPIA, VPRDDKRRDSV, and GENK…KNEN. The span at 2321–2331 shows a compositional bias: polar residues; that stretch reads ANDNSQAQTEQ. Positions 2344 to 2355 are enriched in basic residues; that stretch reads AKKKKKKNKKKR. The segment covering 2358 to 2370 has biased composition (polar residues); it reads MDSNTQEPTTPVD. Residues 2427 to 2441 show a composition bias toward basic and acidic residues; sequence DVEKAIEAPDVRKEL. Low complexity predominate over residues 2449–2461; sequence APEDTPAEPTAET. Basic residues predominate over residues 2473-2484; that stretch reads KKSKKKKKKKNK. The span at 2494-2525 shows a compositional bias: polar residues; the sequence is DPASTETPEASAANSQVVAAEQVESTLETTQP. Basic and acidic residues-rich tracts occupy residues 2580–2590, 2647–2661, and 2677–2691; these read NQAKELPHPEE, PEDK…DLKS, and ALDK…RPAE. Residues 2719-2734 are compositionally biased toward low complexity; sequence EEPTPTAAELETPLSR. Residues 2735 to 2747 are compositionally biased toward basic residues; sequence KNSKKNKKKNKRK. Over residues 2796–2812 the composition is skewed to basic and acidic residues; the sequence is DENKGESRDVQAVKEET. Residues 2874–2884 show a composition bias toward basic residues; that stretch reads KKKAKKKKNRK. Polar residues predominate over residues 2885 to 2894; it reads TANVSESQPE. 2 stretches are compositionally biased toward basic residues: residues 3003–3013 and 3089–3100; these read KKSKKNKKKKQ and KKTKKEKKKKRQ. Positions 3145-3172 are enriched in basic and acidic residues; it reads AIEHAEAAAEHSQEQPNKDVTLHADHSP. Low complexity predominate over residues 3248-3268; that stretch reads PAMEGGAAAEELVAVEPDVLE. Residues 3293 to 3303 are compositionally biased toward polar residues; that stretch reads ELVNAETTQKT. Basic residues predominate over residues 3329 to 3341; the sequence is SKKKDKKKKKKRQ. Residues 3347–3367 show a composition bias toward basic and acidic residues; the sequence is DEQRSSTKEEPTAEFSSDHVP. 2 stretches are compositionally biased toward low complexity: residues 3397 to 3409 and 3422 to 3435; these read TQTA…SSAS and ESTQ…AQTA. Residues 3436–3450 show a composition bias toward basic residues; that stretch reads KSKKKAKKDKKKRKS. Residues 3480 to 3495 are compositionally biased toward basic and acidic residues; that stretch reads EGPKPGDKPTSPKDSS. Low complexity predominate over residues 3547–3564; it reads EEQAVVEETVAPPVVDEA. Composition is skewed to polar residues over residues 3565–3580 and 3604–3613; these read SQLQ…LWSE and VSPSLENNEG. Composition is skewed to basic residues over residues 3642 to 3652 and 3716 to 3730; these read KSKKNKKKKKR and KAKK…KRQS. Polar residues predominate over residues 3768–3787; the sequence is TFSQETSETISTEAKSSEPS. Residues 3800–3819 are compositionally biased toward basic and acidic residues; the sequence is KENQSHDTEPHGGNDKDLTW. Over residues 3823–3837 the composition is skewed to polar residues; it reads MVSSQVEQQQGTPSD. Over residues 3876–3893 the composition is skewed to basic and acidic residues; the sequence is DRLERSGEEGTRVKKEIV. Composition is skewed to polar residues over residues 3915-3925 and 3965-3980; these read ISSQGEDTIQV and KDQF…SQSK. Positions 4010-4020 are enriched in acidic residues; it reads TSQDDSVDAVQ. Positions 4111-4123 are enriched in basic and acidic residues; sequence ESRENKFKEKQLA. Over residues 4244–4255 the composition is skewed to basic residues; the sequence is KNSKKKSKKAKK. Over residues 4328–4345 the composition is skewed to polar residues; that stretch reads LGQTPNMDNQTDDVQSTE. The span at 4378-4391 shows a compositional bias: basic residues; the sequence is KLSKKDRRKAKKKS. Residues 4392-4406 are compositionally biased toward basic and acidic residues; the sequence is AKDAIEPSDEPELRN. Residues 4495–5538 are septal pore-binding region; it reads AIAEFDETAI…SSTMDISNVI (1044 aa). Over residues 4554 to 4570 the composition is skewed to polar residues; the sequence is TEQSAGLQAKSVSSQGA. Composition is skewed to basic and acidic residues over residues 4574–4591 and 4660–4673; these read IQDD…DQTK and EESH…EKGP. The segment covering 4940 to 4954 has biased composition (low complexity); that stretch reads SSVSSVKSVQSTHSV. The segment covering 4966-4988 has biased composition (polar residues); that stretch reads RNTSGDLRAASQAQESHGTQPHA. Over residues 4989–4998 the composition is skewed to pro residues; sequence TPQPPQPPPS. Positions 5050-5223 form a coiled coil; the sequence is HRRSMQHLQE…QQQIAASLHD (174 aa).

Binds directly or indirectly to the Woronin body major protein hexA.

It is found in the cell septum. In terms of biological role, acts as the tether and is essential for anchoring of Woronin bodies at the septal pore. In damaged hyphae, Woronin bodies occlude septal pores in order to separate intact from damaged compartments. The polypeptide is Leashin (Aspergillus fumigatus (strain ATCC MYA-4609 / CBS 101355 / FGSC A1100 / Af293) (Neosartorya fumigata)).